The primary structure comprises 500 residues: L-arabinose isomerase (500 aa).

4 residues coordinate Mn(2+): glutamate 306, glutamate 333, histidine 350, and histidine 450.

Belongs to the arabinose isomerase family. In terms of assembly, homohexamer. Requires Mn(2+) as cofactor.

It catalyses the reaction beta-L-arabinopyranose = L-ribulose. It participates in carbohydrate degradation; L-arabinose degradation via L-ribulose; D-xylulose 5-phosphate from L-arabinose (bacterial route): step 1/3. In terms of biological role, catalyzes the conversion of L-arabinose to L-ribulose. The protein is L-arabinose isomerase of Escherichia coli O7:K1 (strain IAI39 / ExPEC).